Reading from the N-terminus, the 84-residue chain is uncharacterized protein (84 aa).

This is an uncharacterized protein from Schizosaccharomyces pombe (strain 972 / ATCC 24843) (Fission yeast).